The chain runs to 212 residues: Adenylate kinase (212 aa).

10–15 (GAGKGT) lines the ATP pocket. Residues 30 to 59 (STGDILREAMAQETELGQKAKSYIDAGELV) form an NMP region. AMP contacts are provided by residues threonine 31, arginine 36, 57–59 (ELV), 84–87 (GYPR), and glutamine 91. Residues 125–158 (RRRVHEETGETYHLDHDPPPEDVDPDLIVQRSDD) form an LID region. ATP is bound by residues arginine 126 and 135 to 136 (TY). AMP-binding residues include arginine 155 and arginine 166. ATP is bound at residue glycine 194.

It belongs to the adenylate kinase family. Monomer.

Its subcellular location is the cytoplasm. The catalysed reaction is AMP + ATP = 2 ADP. The protein operates within purine metabolism; AMP biosynthesis via salvage pathway; AMP from ADP: step 1/1. Its function is as follows. Catalyzes the reversible transfer of the terminal phosphate group between ATP and AMP. Plays an important role in cellular energy homeostasis and in adenine nucleotide metabolism. The polypeptide is Adenylate kinase (Salinibacter ruber (strain DSM 13855 / M31)).